A 566-amino-acid polypeptide reads, in one-letter code: Mucolipin-2 (566 aa).

Residues 1-65 (MPGDEETLDL…YRARRQIPWK (65 aa)) lie on the Cytoplasmic side of the membrane. A helical membrane pass occupies residues 66–86 (LGLQILKIVMVTTQLVRFGLS). The Extracellular portion of the chain corresponds to 87-288 (NQLVVAFKED…ISGSTQRSTH (202 aa)). Positions 107-123 (KGFSGVDEDDYSCSIYT) are extracellular/lumenal pore loop. Intrachain disulfides connect Cys164–Cys190 and Cys243–Cys274. The chain crosses the membrane as a helical span at residues 289 to 309 (YLLVFDVFVIMICLASLILCT). Residues 310-346 (RSIVLALRLRKRFLNFFLEKYKQRVCGADQWEFVNGW) are Cytoplasmic-facing. A helical membrane pass occupies residues 347 to 367 (YVLVTISDLMTIIGSILKMEI). At 368 to 376 (KAKKLTNYD) the chain is on the extracellular side. Residues 377 to 397 (VCSILLGTSTLFVWVGVIRYL) form a helical membrane-spanning segment. Residues 398-419 (GYFQTYNVLILTMQASLPKVLR) lie on the Cytoplasmic side of the membrane. Residues 420–440 (FCACAGMIYLGYTFCGWIVLG) traverse the membrane as a helical segment. The Extracellular segment spans residues 441 to 448 (PYHEKFEN). The segment at residues 449 to 469 (LNIVAECLFSLVNGDDMFATF) is an intramembrane region (pore-forming). The short motif at 461–464 (NGDD) is the Selectivity filter element. Residues 470 to 480 (AQIQQKSILVW) are Extracellular-facing. A helical transmembrane segment spans residues 481–502 (LFSRLYLYSFISLFIYMVLSLF). The Cytoplasmic portion of the chain corresponds to 503–566 (IALITDSYHT…RSNDHLILID (64 aa)).

This sequence belongs to the transient receptor (TC 1.A.4) family. Polycystin subfamily. MCOLN2 sub-subfamily. As to quaternary structure, forms homooligomeric complexes; probably tetrameric. Can heterooligomerize with MCOLN1; heteromeric assemblies have different channel properties as compared to the respective homooligomers and may be tissue-specific. Interacts with TMEM176A. In terms of tissue distribution, expressed in activated macrophages and microglia (at protein level). As to expression, isoform 1 is widely expressed at very low levels. Isoform 2 is expressed at high levels in lymphoid tissues (thymus and spleen) and kidney, and at moderate levels in heart, lung, liver and stomach.

It localises to the cell membrane. The protein localises to the lysosome membrane. Its subcellular location is the recycling endosome membrane. The catalysed reaction is Ca(2+)(in) = Ca(2+)(out). It carries out the reaction Fe(2+)(in) = Fe(2+)(out). Its activity is regulated as follows. Fe(2+) channel activity is potentiated by low pH. Nonselective cation channel probably playing a role in the regulation of membrane trafficking events. Acts as a Ca(2+)-permeable cation channel with inwardly rectifying activity. May activate ARF6 and be involved in the trafficking of GPI-anchored cargo proteins to the cell surface via the ARF6-regulated recycling pathway. May play a role in immune processes. In adaptive immunity, TRPML2 and TRPML1 may play redundant roles in the function of the specialized lysosomes of B cells. In the innate immune response, may play a role in the regulation of chemokine secretion and macrophage migration. Through a possible and probably tissue-specific heteromerization with MCOLN1 may be at least in part involved in many lysosome-dependent cellular events. Also functions as a Fe(2+) permeable channel. The polypeptide is Mucolipin-2 (Mcoln2) (Mus musculus (Mouse)).